The primary structure comprises 420 residues: UDP-N-acetylglucosamine 1-carboxyvinyltransferase (420 aa).

22 to 23 serves as a coordination point for phosphoenolpyruvate; that stretch reads KN. Position 93 (arginine 93) interacts with UDP-N-acetyl-alpha-D-glucosamine. Residue cysteine 117 is the Proton donor of the active site. Cysteine 117 is modified (2-(S-cysteinyl)pyruvic acid O-phosphothioketal). UDP-N-acetyl-alpha-D-glucosamine contacts are provided by aspartate 307 and isoleucine 329.

The protein belongs to the EPSP synthase family. MurA subfamily.

The protein resides in the cytoplasm. It catalyses the reaction phosphoenolpyruvate + UDP-N-acetyl-alpha-D-glucosamine = UDP-N-acetyl-3-O-(1-carboxyvinyl)-alpha-D-glucosamine + phosphate. Its pathway is cell wall biogenesis; peptidoglycan biosynthesis. Its function is as follows. Cell wall formation. Adds enolpyruvyl to UDP-N-acetylglucosamine. This Cellvibrio japonicus (strain Ueda107) (Pseudomonas fluorescens subsp. cellulosa) protein is UDP-N-acetylglucosamine 1-carboxyvinyltransferase.